The following is a 130-amino-acid chain: Small ribosomal subunit protein uS9 (130 aa).

This sequence belongs to the universal ribosomal protein uS9 family.

The sequence is that of Small ribosomal subunit protein uS9 from Pseudomonas fluorescens (strain Pf0-1).